The following is a 226-amino-acid chain: Lipoprotein-releasing system ATP-binding protein LolD (226 aa).

One can recognise an ABC transporter domain in the interval 6–226 (IELKSVERHY…TLADGKVVPL (221 aa)). 42 to 49 (APSGTGKS) contributes to the ATP binding site.

Belongs to the ABC transporter superfamily. Lipoprotein translocase (TC 3.A.1.125) family. In terms of assembly, the complex is composed of two ATP-binding proteins (LolD) and two transmembrane proteins (LolC and LolE).

It localises to the cell inner membrane. Its function is as follows. Part of the ABC transporter complex LolCDE involved in the translocation of mature outer membrane-directed lipoproteins, from the inner membrane to the periplasmic chaperone, LolA. Responsible for the formation of the LolA-lipoprotein complex in an ATP-dependent manner. The polypeptide is Lipoprotein-releasing system ATP-binding protein LolD (Mesorhizobium japonicum (strain LMG 29417 / CECT 9101 / MAFF 303099) (Mesorhizobium loti (strain MAFF 303099))).